The chain runs to 802 residues: Fibroblast growth factor receptor 4 (802 aa).

An N-terminal signal peptide occupies residues 1–21; sequence MRLLLALLGVLLSVPGPPVLS. The Ig-like C2-type 1 domain maps to 22–118; sequence LEASEEVELE…VLQNLTLITG (97 aa). Residues 22 to 369 lie on the Extracellular side of the membrane; it reads LEASEEVELE…AAAPEARYTD (348 aa). C57 and C101 are oxidised to a cystine. N112 carries N-linked (GlcNAc...) asparagine glycosylation. The disordered stretch occupies residues 119–148; the sequence is DSLTSSNDDEDPKSHRDPSNRHSYPQQAPY. Ig-like C2-type domains are found at residues 152-240 and 249-349; these read PQRM…YLLD and PILQ…AWLT. A disulfide bond links C172 and C224. 4 N-linked (GlcNAc...) asparagine glycosylation sites follow: N258, N290, N311, and N322. C271 and C333 form a disulfide bridge. A helical membrane pass occupies residues 370-390; it reads IILYASGSLALAVLLLLAGLY. Y390 bears the Phosphotyrosine; in variant R-388 mark. Residues 391-802 lie on the Cytoplasmic side of the membrane; the sequence is RGQALHGRHP…SFPFGSGVQT (412 aa). Positions 467-755 constitute a Protein kinase domain; that stretch reads LVLGKPLGEG…VLLAVSEEYL (289 aa). ATP contacts are provided by residues 473–481 and K503; that span reads LGEGCFGQV. S573 carries the phosphoserine modification. The active-site Proton acceptor is the D612. A phosphotyrosine; by autocatalysis mark is found at Y642, Y643, and Y754.

Belongs to the protein kinase superfamily. Tyr protein kinase family. Fibroblast growth factor receptor subfamily. As to quaternary structure, monomer. Homodimer after ligand binding. Interacts with FGF1, FGF2, FGF4, FGF6, FGF8, FGF9, FGF16, FGF17, FGF18, FGF19, FGF21 and FGF23 (in vitro). Binding affinity for FGF family members is enhanced by interactions between FGFs and heparan sulfate proteoglycans. Interacts with KLB; this strongly increases the affinity for FGF19 and FGF23. Affinity for FGF19 is strongly increased by KLB and sulfated glycosaminoglycans. KLB and KL both interact with the core-glycosylated FGFR4 in the endoplasmic reticulum and promote its degradation, so that only FGFR4 with fully mature N-glycans is expressed at the cell surface. Identified in a complex with NCAM1, CDH2, PLCG1, FRS2, SRC, SHC1, GAP43 and CTTN. Interacts with MMP14 and HIP1. Interacts with STAT3. Post-translationally, N-glycosylated. Full maturation of the glycan chains in the Golgi is essential for high affinity interaction with FGF19. Ubiquitinated. Subject to proteasomal degradation when not fully glycosylated. In terms of processing, autophosphorylated. Binding of FGF family members together with heparan sulfate proteoglycan or heparin promotes receptor dimerization and autophosphorylation on tyrosine residues. Autophosphorylation occurs in trans between the two FGFR molecules present in the dimer. As to expression, expressed in gastrointestinal epithelial cells, pancreas, and gastric and pancreatic cancer cell lines.

Its subcellular location is the cell membrane. It is found in the endosome. The protein localises to the endoplasmic reticulum. It localises to the secreted. The enzyme catalyses L-tyrosyl-[protein] + ATP = O-phospho-L-tyrosyl-[protein] + ADP + H(+). Present in an inactive conformation in the absence of bound ligand. Ligand binding leads to dimerization and activation by autophosphorylation on tyrosine residues. Functionally, tyrosine-protein kinase that acts as a cell-surface receptor for fibroblast growth factors and plays a role in the regulation of cell proliferation, differentiation and migration, and in regulation of lipid metabolism, bile acid biosynthesis, glucose uptake, vitamin D metabolism and phosphate homeostasis. Required for normal down-regulation of the expression of CYP7A1, the rate-limiting enzyme in bile acid synthesis, in response to FGF19. Phosphorylates PLCG1 and FRS2. Ligand binding leads to the activation of several signaling cascades. Activation of PLCG1 leads to the production of the cellular signaling molecules diacylglycerol and inositol 1,4,5-trisphosphate. Phosphorylation of FRS2 triggers recruitment of GRB2, GAB1, PIK3R1 and SOS1, and mediates activation of RAS, MAPK1/ERK2, MAPK3/ERK1 and the MAP kinase signaling pathway, as well as of the AKT1 signaling pathway. Promotes SRC-dependent phosphorylation of the matrix protease MMP14 and its lysosomal degradation. FGFR4 signaling is down-regulated by receptor internalization and degradation; MMP14 promotes internalization and degradation of FGFR4. Mutations that lead to constitutive kinase activation or impair normal FGFR4 inactivation lead to aberrant signaling. The protein is Fibroblast growth factor receptor 4 (FGFR4) of Homo sapiens (Human).